Here is a 396-residue protein sequence, read N- to C-terminus: GDSL esterase/lipase ACHE (396 aa).

A signal peptide spans 1–31 (MATAATATAGSRAAVLLLLSLALALALRPSD). The Nucleophile role is filled by Ser-49. Residues Asn-108, Asn-126, Asn-151, Asn-196, and Asn-339 are each glycosylated (N-linked (GlcNAc...) asparagine). Catalysis depends on residues Asp-359 and His-362.

Belongs to the 'GDSL' lipolytic enzyme family.

Its subcellular location is the secreted. In terms of biological role, esterase that can hydrolyze acetylthiocholine and propionylthiocholine in vitro. Substrate preference is propionylthiocholine &gt; acetylthiocholine. Possesses extremely low activity against butyrylthiocholine. This is GDSL esterase/lipase ACHE from Zea mays (Maize).